Here is a 235-residue protein sequence, read N- to C-terminus: 7-cyano-7-deazaguanine synthase (235 aa).

8 to 18 contacts ATP; it reads FSGGQDSTTCL. The Zn(2+) site is built by cysteine 187, cysteine 196, cysteine 199, and cysteine 202.

The protein belongs to the QueC family. Zn(2+) is required as a cofactor.

The enzyme catalyses 7-carboxy-7-deazaguanine + NH4(+) + ATP = 7-cyano-7-deazaguanine + ADP + phosphate + H2O + H(+). It participates in purine metabolism; 7-cyano-7-deazaguanine biosynthesis. Its function is as follows. Catalyzes the ATP-dependent conversion of 7-carboxy-7-deazaguanine (CDG) to 7-cyano-7-deazaguanine (preQ(0)). The sequence is that of 7-cyano-7-deazaguanine synthase from Aeromonas hydrophila subsp. hydrophila (strain ATCC 7966 / DSM 30187 / BCRC 13018 / CCUG 14551 / JCM 1027 / KCTC 2358 / NCIMB 9240 / NCTC 8049).